The sequence spans 474 residues: Trehalose-6-phosphate synthase (474 aa).

Arg10 serves as a coordination point for D-glucose 6-phosphate. A UDP-alpha-D-glucose-binding site is contributed by 22 to 23 (GG). 2 residues coordinate D-glucose 6-phosphate: Tyr77 and Asp131. The UDP-alpha-D-glucose site is built by Arg263 and Lys268. A D-glucose 6-phosphate-binding site is contributed by Arg301. UDP-alpha-D-glucose-binding positions include Phe340 and 366–370 (LVAKE).

This sequence belongs to the glycosyltransferase 20 family. Homotetramer.

The catalysed reaction is D-glucose 6-phosphate + UDP-alpha-D-glucose = alpha,alpha-trehalose 6-phosphate + UDP + H(+). It participates in glycan biosynthesis; trehalose biosynthesis. Probably involved in the osmoprotection via the biosynthesis of trehalose. Catalyzes the transfer of glucose from UDP-alpha-D-glucose (UDP-Glc) to D-glucose 6-phosphate (Glc-6-P) to form trehalose-6-phosphate. Acts with retention of the anomeric configuration of the UDP-sugar donor. This Escherichia coli O1:K1 / APEC protein is Trehalose-6-phosphate synthase.